Here is a 289-residue protein sequence, read N- to C-terminus: uncharacterized protein (289 aa).

Residues 1–19 (MAKWLGAPLARGVSTATRA) form the signal peptide. The next 2 membrane-spanning stretches (helical) occupy residues 90–110 (GLLA…GWGV) and 257–277 (AALS…LVFA).

It is found in the cell membrane. This is an uncharacterized protein from Mycobacterium tuberculosis (strain CDC 1551 / Oshkosh).